The primary structure comprises 74 residues: ATP synthase subunit 9, mitochondrial (74 aa).

2 helical membrane-spanning segments follow: residues 8-28 (IGAGLATIGVSGAGVGIGLIF) and 50-70 (ILGFALTEATGLFCLMLAFLI).

It belongs to the ATPase C chain family. As to quaternary structure, F-type ATPases have 2 components, CF(1) - the catalytic core - and CF(0) - the membrane proton channel. CF(1) has five subunits: alpha(3), beta(3), gamma(1), delta(1), epsilon(1). CF(0) has three main subunits: a, b and c.

It localises to the mitochondrion membrane. Functionally, mitochondrial membrane ATP synthase (F(1)F(0) ATP synthase or Complex V) produces ATP from ADP in the presence of a proton gradient across the membrane which is generated by electron transport complexes of the respiratory chain. F-type ATPases consist of two structural domains, F(1) - containing the extramembraneous catalytic core and F(0) - containing the membrane proton channel, linked together by a central stalk and a peripheral stalk. During catalysis, ATP synthesis in the catalytic domain of F(1) is coupled via a rotary mechanism of the central stalk subunits to proton translocation. Part of the complex F(0) domain. A homomeric c-ring of probably 10 subunits is part of the complex rotary element. The chain is ATP synthase subunit 9, mitochondrial (atp9) from Schizosaccharomyces pombe (strain 972 / ATCC 24843) (Fission yeast).